Here is a 160-residue protein sequence, read N- to C-terminus: Ribosomal RNA large subunit methyltransferase H (160 aa).

S-adenosyl-L-methionine is bound by residues leucine 76 and glycine 108.

It belongs to the RNA methyltransferase RlmH family. In terms of assembly, homodimer.

It localises to the cytoplasm. The enzyme catalyses pseudouridine(1915) in 23S rRNA + S-adenosyl-L-methionine = N(3)-methylpseudouridine(1915) in 23S rRNA + S-adenosyl-L-homocysteine + H(+). Specifically methylates the pseudouridine at position 1915 (m3Psi1915) in 23S rRNA. In Rhodopseudomonas palustris (strain HaA2), this protein is Ribosomal RNA large subunit methyltransferase H.